A 156-amino-acid chain; its full sequence is Small ribosomal subunit protein uS7 (156 aa).

The protein belongs to the universal ribosomal protein uS7 family. In terms of assembly, part of the 30S ribosomal subunit. Contacts proteins S9 and S11.

In terms of biological role, one of the primary rRNA binding proteins, it binds directly to 16S rRNA where it nucleates assembly of the head domain of the 30S subunit. Is located at the subunit interface close to the decoding center, probably blocks exit of the E-site tRNA. This chain is Small ribosomal subunit protein uS7, found in Bacillus cereus (strain ZK / E33L).